Here is a 768-residue protein sequence, read N- to C-terminus: Phosphoribosylformylglycinamidine synthase subunit PurL (768 aa).

The active site involves histidine 44. Residues tyrosine 47 and lysine 86 each coordinate ATP. Glutamate 88 contacts Mg(2+). Substrate-binding positions include 89–92 and arginine 111; that span reads SHNH. The Proton acceptor role is filled by histidine 90. Aspartate 112 provides a ligand contact to Mg(2+). Glutamine 235 serves as a coordination point for substrate. Residue aspartate 263 coordinates Mg(2+). 307–309 contributes to the substrate binding site; sequence ESQ. Residues aspartate 518 and glycine 555 each coordinate ATP. A Mg(2+)-binding site is contributed by asparagine 556. Serine 558 serves as a coordination point for substrate.

Belongs to the FGAMS family. In terms of assembly, monomer. Part of the FGAM synthase complex composed of 1 PurL, 1 PurQ and 2 PurS subunits.

The protein resides in the cytoplasm. The catalysed reaction is N(2)-formyl-N(1)-(5-phospho-beta-D-ribosyl)glycinamide + L-glutamine + ATP + H2O = 2-formamido-N(1)-(5-O-phospho-beta-D-ribosyl)acetamidine + L-glutamate + ADP + phosphate + H(+). It participates in purine metabolism; IMP biosynthesis via de novo pathway; 5-amino-1-(5-phospho-D-ribosyl)imidazole from N(2)-formyl-N(1)-(5-phospho-D-ribosyl)glycinamide: step 1/2. In terms of biological role, part of the phosphoribosylformylglycinamidine synthase complex involved in the purines biosynthetic pathway. Catalyzes the ATP-dependent conversion of formylglycinamide ribonucleotide (FGAR) and glutamine to yield formylglycinamidine ribonucleotide (FGAM) and glutamate. The FGAM synthase complex is composed of three subunits. PurQ produces an ammonia molecule by converting glutamine to glutamate. PurL transfers the ammonia molecule to FGAR to form FGAM in an ATP-dependent manner. PurS interacts with PurQ and PurL and is thought to assist in the transfer of the ammonia molecule from PurQ to PurL. The chain is Phosphoribosylformylglycinamidine synthase subunit PurL from Synechococcus sp. (strain JA-2-3B'a(2-13)) (Cyanobacteria bacterium Yellowstone B-Prime).